We begin with the raw amino-acid sequence, 510 residues long: Protein fork head (510 aa).

2 disordered regions span residues 1–62 and 175–205; these read MQKL…SPLA and AMPP…YRRS. Residues 20–39 show a composition bias toward gly residues; the sequence is SGGGGPPSGGGGGGGGGGGG. The segment covering 47–60 has biased composition (low complexity); it reads NNPNPTSNGGSMSP. Ser-187 and Ser-190 each carry phosphoserine. Residues 209-300 constitute a DNA-binding region (fork-head); that stretch reads AKPPYSYISL…GNMFENGCYL (92 aa). Positions 309–359 are disordered; that stretch reads EKKEAIRQLHKSPSHSSLEATSPGKKDHEDSHHMHHHHHSRLDHHQHHKEA. Residues Ser-320, Ser-322, and Ser-330 each carry the phosphoserine modification. Residues 341–356 show a composition bias toward basic residues; that stretch reads HMHHHHHSRLDHHQHH.

The protein localises to the nucleus. Fkh promotes terminal as opposed to segmental development. In the absence of fkh, this developmental switch does not occur. The nuclear localization of the fkh protein suggest that fkh regulates the transcription of other, subordinate, genes. This Drosophila melanogaster (Fruit fly) protein is Protein fork head (fkh).